An 86-amino-acid chain; its full sequence is Small ribosomal subunit protein bS20 (86 aa).

Belongs to the bacterial ribosomal protein bS20 family.

Binds directly to 16S ribosomal RNA. This chain is Small ribosomal subunit protein bS20, found in Rhodococcus erythropolis (strain PR4 / NBRC 100887).